A 120-amino-acid polypeptide reads, in one-letter code: uncharacterized protein (120 aa).

This is an uncharacterized protein from Dictyostelium discoideum (Social amoeba).